The primary structure comprises 374 residues: MSLEAFHHSEPLTLGVELELQLVNTHNYDLAPYAEDMLRLMARQPLPGSVVPEMTNSMIEVSTGICHSGSEVLGQLTQIRDALVRSADKLNIAVVGGGTHPFQQWHERRIYDKPRFQELSQLYGYLSKQFTIFGQHVHIGCPDADAALLMLHRMSRYIPHFIALSASSPYVQGQDTAFDSARLNSVFAFPLSGRAPMVLTWKDFEAYFDKMTRTGVVKSMKDFYWDIRPKPEFGTIEIRVFDTPLTIERAAALSAFVQSLGAWFLAEQPFTPSEDDYLVYTYNRFQACRFGMQAVYVDPATGEHMPLRDHILQTIDHIARHATVTGASGALHLLRSEAAAGQNDARWLRDRQRDEQLLGEVSRQAALRFRGAPA.

The protein belongs to the glutamate--cysteine ligase type 2 family. YbdK subfamily.

It carries out the reaction L-cysteine + L-glutamate + ATP = gamma-L-glutamyl-L-cysteine + ADP + phosphate + H(+). ATP-dependent carboxylate-amine ligase which exhibits weak glutamate--cysteine ligase activity. In Paracidovorax citrulli (strain AAC00-1) (Acidovorax citrulli), this protein is Putative glutamate--cysteine ligase 2.